The following is a 267-amino-acid chain: Ribosomal RNA small subunit methyltransferase A (267 aa).

S-adenosyl-L-methionine contacts are provided by asparagine 18, leucine 20, glycine 45, glutamate 66, aspartate 91, and asparagine 112.

The protein belongs to the class I-like SAM-binding methyltransferase superfamily. rRNA adenine N(6)-methyltransferase family. RsmA subfamily.

Its subcellular location is the cytoplasm. The enzyme catalyses adenosine(1518)/adenosine(1519) in 16S rRNA + 4 S-adenosyl-L-methionine = N(6)-dimethyladenosine(1518)/N(6)-dimethyladenosine(1519) in 16S rRNA + 4 S-adenosyl-L-homocysteine + 4 H(+). In terms of biological role, specifically dimethylates two adjacent adenosines (A1518 and A1519) in the loop of a conserved hairpin near the 3'-end of 16S rRNA in the 30S particle. May play a critical role in biogenesis of 30S subunits. The sequence is that of Ribosomal RNA small subunit methyltransferase A from Shewanella amazonensis (strain ATCC BAA-1098 / SB2B).